The sequence spans 498 residues: Calcium-binding tyrosine phosphorylation-regulated protein (498 aa).

The region spanning tyrosine 12–glutamate 49 is the RIIa domain. Disordered stretches follow at residues glycine 74 to glutamate 107, glutamate 135 to alanine 164, and valine 247 to glutamine 279. Positions serine 145–alanine 164 are enriched in low complexity.

In terms of assembly, interacts with FSCB. Phosphorylated on tyrosine residues during in vitro capacitation. Dephosphorylation affects its ability to bind calcium. In terms of tissue distribution, expressed in testis.

The protein resides in the cytoplasm. Its subcellular location is the cytoskeleton. The protein localises to the cell projection. It is found in the cilium. It localises to the flagellum. In terms of biological role, may function as a regulator of both motility- and head-associated functions such as capacitation and the acrosome reaction. Binds calcium in vitro. This is Calcium-binding tyrosine phosphorylation-regulated protein (CABYR) from Vulpes vulpes (Red fox).